The following is a 49-amino-acid chain: Large ribosomal subunit protein bL33B (49 aa).

The protein belongs to the bacterial ribosomal protein bL33 family.

The sequence is that of Large ribosomal subunit protein bL33B from Lacticaseibacillus paracasei (strain ATCC 334 / BCRC 17002 / CCUG 31169 / CIP 107868 / KCTC 3260 / NRRL B-441) (Lactobacillus paracasei).